A 445-amino-acid polypeptide reads, in one-letter code: Phosphoglucosamine mutase (445 aa).

Residue Ser-102 is the Phosphoserine intermediate of the active site. Mg(2+) is bound by residues Ser-102, Asp-241, Asp-243, and Asp-245. Residue Ser-102 is modified to Phosphoserine.

It belongs to the phosphohexose mutase family. It depends on Mg(2+) as a cofactor. Post-translationally, activated by phosphorylation.

The enzyme catalyses alpha-D-glucosamine 1-phosphate = D-glucosamine 6-phosphate. Functionally, catalyzes the conversion of glucosamine-6-phosphate to glucosamine-1-phosphate. The polypeptide is Phosphoglucosamine mutase (Shewanella pealeana (strain ATCC 700345 / ANG-SQ1)).